Consider the following 202-residue polypeptide: Transmembrane protein 223 (202 aa).

Residues 1–43 (MAAPWRRWPTGLLAVLRPLLTCRPLQGTTLQRDVLLFEHDRGR) are Mitochondrial matrix-facing. The chain crosses the membrane as a helical span at residues 44 to 64 (FFTILGLFCAGQGVFWASMAV). Residues 65-97 (AAVSRPPVPVQPLDAEVPNRGPFDLRSALWRYG) lie on the Mitochondrial intermembrane side of the membrane. A helical membrane pass occupies residues 98 to 118 (LAVGCGAIGALVLGAGLLFSL). Residues 119-202 (RSVRSVVLRA…DNTVGAYRSL (84 aa)) are Mitochondrial matrix-facing.

This sequence belongs to the TMEM223 family. As to quaternary structure, associates with the mitochondrial ribosome.

The protein localises to the mitochondrion inner membrane. In terms of biological role, mitochondrial ribosome-associated protein involved in the first steps of cytochrome c oxidase complex (complex IV) biogenesis. Stimulates the translation of MT-CO1 mRNA and is a constituent of early MT-CO1 assembly intermediates. The chain is Transmembrane protein 223 from Homo sapiens (Human).